The following is a 98-amino-acid chain: Large ribosomal subunit protein uL23 (98 aa).

It belongs to the universal ribosomal protein uL23 family. As to quaternary structure, part of the 50S ribosomal subunit. Contacts protein L29, and trigger factor when it is bound to the ribosome.

Its function is as follows. One of the early assembly proteins it binds 23S rRNA. One of the proteins that surrounds the polypeptide exit tunnel on the outside of the ribosome. Forms the main docking site for trigger factor binding to the ribosome. The chain is Large ribosomal subunit protein uL23 from Bordetella bronchiseptica (strain ATCC BAA-588 / NCTC 13252 / RB50) (Alcaligenes bronchisepticus).